The following is a 343-amino-acid chain: MSDQSMSVTLLAIESSCDETAAAVIQDGNILCNIVASQRIHEKYGGIVPELASRAHQQHIIPVVAQALLEANIQKSDLNAVACTSGPGLLGALLVGVSFSKAFASALHIPVIKVNHMKAHILAHFIGDVKPSFPFICMTVSGGHTQLVIVRNYLEMEVVGETQDDAVGEAFDKTAKLMGLPYPGGPLIDSYAKQGNPLAFPFPTVDMPGYNYSFSGIKTAFMYFLKKNTAVDPDFIQKNLPDICASVQHALIDVLMRKLKRLVVDTGINRVAIAGGVSANSGLRKAMEQKREQEGWDVYIPAFEYCTDNAAMIAVAGYHQYLENDFAGWDLSPEPRLRIGGGL.

Fe cation-binding residues include histidine 116 and histidine 120. Substrate is bound by residues 139–143 (TVSGG), aspartate 172, glycine 185, aspartate 189, and asparagine 280. Aspartate 308 is a Fe cation binding site.

The protein belongs to the KAE1 / TsaD family. Requires Fe(2+) as cofactor.

It localises to the cytoplasm. It carries out the reaction L-threonylcarbamoyladenylate + adenosine(37) in tRNA = N(6)-L-threonylcarbamoyladenosine(37) in tRNA + AMP + H(+). In terms of biological role, required for the formation of a threonylcarbamoyl group on adenosine at position 37 (t(6)A37) in tRNAs that read codons beginning with adenine. Is involved in the transfer of the threonylcarbamoyl moiety of threonylcarbamoyl-AMP (TC-AMP) to the N6 group of A37, together with TsaE and TsaB. TsaD likely plays a direct catalytic role in this reaction. The sequence is that of tRNA N6-adenosine threonylcarbamoyltransferase from Cytophaga hutchinsonii (strain ATCC 33406 / DSM 1761 / CIP 103989 / NBRC 15051 / NCIMB 9469 / D465).